Consider the following 488-residue polypeptide: Glutamyl-tRNA(Gln) amidotransferase subunit A (488 aa).

Active-site charge relay system residues include Lys-77 and Ser-152. Ser-176 functions as the Acyl-ester intermediate in the catalytic mechanism.

The protein belongs to the amidase family. GatA subfamily. Heterotrimer of A, B and C subunits.

The enzyme catalyses L-glutamyl-tRNA(Gln) + L-glutamine + ATP + H2O = L-glutaminyl-tRNA(Gln) + L-glutamate + ADP + phosphate + H(+). In terms of biological role, allows the formation of correctly charged Gln-tRNA(Gln) through the transamidation of misacylated Glu-tRNA(Gln) in organisms which lack glutaminyl-tRNA synthetase. The reaction takes place in the presence of glutamine and ATP through an activated gamma-phospho-Glu-tRNA(Gln). This Streptococcus equi subsp. zooepidemicus (strain MGCS10565) protein is Glutamyl-tRNA(Gln) amidotransferase subunit A.